The following is a 408-amino-acid chain: Serine/threonine-protein kinase UCNL (408 aa).

Positions 21 to 341 (IKALKILGKG…AAEIKELAFF (321 aa)) constitute a Protein kinase domain. ATP-binding positions include 27–35 (LGKGATGTV) and lysine 54. Residue aspartate 152 is the Proton acceptor of the active site. In terms of domain architecture, AGC-kinase C-terminal spans 342-408 (AGVRWDLLTE…CRKNDPFIEF (67 aa)).

Belongs to the protein kinase superfamily. AGC Ser/Thr protein kinase family. In terms of tissue distribution, expressed in the epidermis and cortex of the transition zone of the root apex. Expressed in rosette leaves, stems, flowers and siliques.

It is found in the cytoplasm. The protein resides in the nucleus. It carries out the reaction L-seryl-[protein] + ATP = O-phospho-L-seryl-[protein] + ADP + H(+). The catalysed reaction is L-threonyl-[protein] + ATP = O-phospho-L-threonyl-[protein] + ADP + H(+). Its function is as follows. Regulates planar ovule integument development. The sequence is that of Serine/threonine-protein kinase UCNL from Arabidopsis thaliana (Mouse-ear cress).